Consider the following 372-residue polypeptide: MRILADQAIPYVYKLFGSDNYVQVCDGRSISANMLKDVDVLIIRSITKVNHMLLYDSSIKFIGTVTSGVDHIDQNYLKNNNIRCVSTPGSNAVSVVEYVCATLFWLAQRDCFFLRDKTVGIIGVGNIGNLLYQRLNSLGVHTLLYDPYKSKCDTDRMSWKSLDILVSKSDILTLHVPLTYTGAYPTWHMINKDILDALPSNSILINTSRGAVVNNDDLLAILRCGKKINVILDVWESEPKLSLPLLSYVDIGTAHIAGYSFESRIRSIKKIYDDYCDYFNVKNKVNWISLGLSDIRYIAVSRLDECIINRLIQLVYNVYYDHIALKNNVLRLRGFDKLREYYCFRREWSSLLVDSKNGYNNDILFKFGFSTL.

Substrate contacts are provided by Ser45 and Thr66. Asp146 lines the NAD(+) pocket. Arg209 is a catalytic residue. Asp233 is an NAD(+) binding site. Glu238 is an active-site residue. The active-site Proton donor is His255. Gly258 contacts NAD(+). Tyr259 lines the substrate pocket.

The protein belongs to the D-isomer specific 2-hydroxyacid dehydrogenase family. PdxB subfamily. In terms of assembly, homodimer.

It is found in the cytoplasm. It carries out the reaction 4-phospho-D-erythronate + NAD(+) = (R)-3-hydroxy-2-oxo-4-phosphooxybutanoate + NADH + H(+). Its pathway is cofactor biosynthesis; pyridoxine 5'-phosphate biosynthesis; pyridoxine 5'-phosphate from D-erythrose 4-phosphate: step 2/5. Its function is as follows. Catalyzes the oxidation of erythronate-4-phosphate to 3-hydroxy-2-oxo-4-phosphonooxybutanoate. The protein is Erythronate-4-phosphate dehydrogenase of Blochmanniella floridana.